The sequence spans 181 residues: TATA-box-binding protein (181 aa).

2 repeat units span residues 7-83 (IVNV…IKEL) and 98-173 (VQNM…LTTL).

The protein belongs to the TBP family.

General factor that plays a role in the activation of archaeal genes transcribed by RNA polymerase. Binds specifically to the TATA box promoter element which lies close to the position of transcription initiation. This chain is TATA-box-binding protein, found in Methanococcus maripaludis (strain C7 / ATCC BAA-1331).